The primary structure comprises 76 residues: Small ribosomal subunit protein bS21C (76 aa).

The tract at residues 52–76 is disordered; sequence GRQRKLARKQMQREGLLPTKPRKDK.

Belongs to the bacterial ribosomal protein bS21 family.

This chain is Small ribosomal subunit protein bS21C (rpsU3), found in Agrobacterium fabrum (strain C58 / ATCC 33970) (Agrobacterium tumefaciens (strain C58)).